The sequence spans 282 residues: NADPH-dependent 7-cyano-7-deazaguanine reductase (282 aa).

Residue 88–90 (IES) coordinates substrate. 90-91 (SK) is a binding site for NADPH. Catalysis depends on cysteine 190, which acts as the Thioimide intermediate. Aspartate 197 serves as the catalytic Proton donor. Residue 229–230 (HE) coordinates substrate. NADPH is bound at residue 258–259 (RG).

Belongs to the GTP cyclohydrolase I family. QueF type 2 subfamily. In terms of assembly, homodimer.

Its subcellular location is the cytoplasm. The catalysed reaction is 7-aminomethyl-7-carbaguanine + 2 NADP(+) = 7-cyano-7-deazaguanine + 2 NADPH + 3 H(+). It participates in tRNA modification; tRNA-queuosine biosynthesis. In terms of biological role, catalyzes the NADPH-dependent reduction of 7-cyano-7-deazaguanine (preQ0) to 7-aminomethyl-7-deazaguanine (preQ1). This chain is NADPH-dependent 7-cyano-7-deazaguanine reductase, found in Escherichia coli (strain UTI89 / UPEC).